The sequence spans 459 residues: Carbonic anhydrase 9 (459 aa).

The N-terminal stretch at 1–37 is a signal peptide; it reads MAPLCPSPWLPLLIPAPAPGLTVQLLLSLLLLVPVHP. The interval 38–112 is proteoglycan-like (PG); that stretch reads QRLPRMQEDS…EEEGSLKLED (75 aa). The Extracellular portion of the chain corresponds to 38–414; sequence QRLPRMQEDS…QLNSCLAAGD (377 aa). A disordered region spans residues 42-154; the sequence is RMQEDSPLGG…GDPPWPRVSP (113 aa). Residues 55–95 show a composition bias toward acidic residues; the sequence is GEDDPLGEEDLPSEEDSPREEDPPGEEDLPGEEDLPGEEDL. A compositionally biased stretch (basic and acidic residues) spans 96-112; it reads PEVKPKSEEEGSLKLED. O-linked (GlcNAc...) threonine glycosylation is present at threonine 115. Positions 129–140 are enriched in basic and acidic residues; it reads AHRDKEGDDQSH. The catalytic stretch occupies residues 138 to 391; sequence QSHWRYGGDP…NGRVIEASFP (254 aa). The Alpha-carbonic anhydrase domain occupies 139–390; sequence SHWRYGGDPP…LNGRVIEASF (252 aa). The cysteines at positions 156 and 336 are disulfide-linked. The active-site Proton donor/acceptor is histidine 200. Positions 226, 228, and 251 each coordinate Zn(2+). A substrate-binding site is contributed by 332–333; the sequence is TT. Asparagine 346 carries N-linked (GlcNAc...) asparagine glycosylation. The helical transmembrane segment at 415–435 threads the bilayer; it reads ILALVFGLLFAVTSVAFLVQM. Topologically, residues 436–459 are cytoplasmic; the sequence is RRQHRRGTKGGVSYRPAEVAETGA. Position 449 is a phosphotyrosine (tyrosine 449).

Belongs to the alpha-carbonic anhydrase family. Forms oligomers linked by disulfide bonds. The cofactor is Zn(2+). In terms of processing, asn-346 bears high-mannose type glycan structures. In terms of tissue distribution, expressed primarily in carcinoma cells lines. Expression is restricted to very few normal tissues and the most abundant expression is found in the epithelial cells of gastric mucosa.

It localises to the nucleus. It is found in the nucleolus. Its subcellular location is the cell membrane. The protein resides in the cell projection. The protein localises to the microvillus membrane. The catalysed reaction is hydrogencarbonate + H(+) = CO2 + H2O. With respect to regulation, inhibited by coumarins, saccharin, sulfonamide derivatives such as acetazolamide (AZA) and Foscarnet (phosphonoformate trisodium salt). Functionally, catalyzes the interconversion between carbon dioxide and water and the dissociated ions of carbonic acid (i.e. bicarbonate and hydrogen ions). The chain is Carbonic anhydrase 9 (CA9) from Homo sapiens (Human).